The following is a 122-amino-acid chain: Protein SPIRAL1-like 3 (122 aa).

Disordered stretches follow at residues 1–78 and 96–122; these read MGKA…NNYF and KVHA…SGNK. The span at 32–61 shows a compositional bias: low complexity; sequence TMGTTTTTTTTTTTDGTGGRPITTTTTTVT. The residue at position 73 (Ser73) is a Phosphoserine.

It belongs to the SPIRAL1 family. Ubiquitous. Preferentially expressed in above-ground organs.

Acts redundantly with SPR1 in maintaining the cortical microtubules organization essential for anisotropic cell growth. In Arabidopsis thaliana (Mouse-ear cress), this protein is Protein SPIRAL1-like 3 (SP1L3).